Consider the following 281-residue polypeptide: Shikimate dehydrogenase (NADP(+)) (281 aa).

Shikimate contacts are provided by residues 20–22 (SRS) and Thr67. The active-site Proton acceptor is Lys71. Residue Asp83 coordinates NADP(+). Shikimate contacts are provided by Asn92 and Asp108. NADP(+) contacts are provided by residues 133–137 (GAGGA), 157–162 (NRTEAR), and Met225. Tyr227 provides a ligand contact to shikimate. Gly248 is an NADP(+) binding site.

Belongs to the shikimate dehydrogenase family. Homodimer.

The enzyme catalyses shikimate + NADP(+) = 3-dehydroshikimate + NADPH + H(+). It functions in the pathway metabolic intermediate biosynthesis; chorismate biosynthesis; chorismate from D-erythrose 4-phosphate and phosphoenolpyruvate: step 4/7. Functionally, involved in the biosynthesis of the chorismate, which leads to the biosynthesis of aromatic amino acids. Catalyzes the reversible NADPH linked reduction of 3-dehydroshikimate (DHSA) to yield shikimate (SA). This Paracidovorax citrulli (strain AAC00-1) (Acidovorax citrulli) protein is Shikimate dehydrogenase (NADP(+)).